The chain runs to 134 residues: UPF0102 protein Dvul_2148 (134 aa).

Belongs to the UPF0102 family.

The protein is UPF0102 protein Dvul_2148 of Nitratidesulfovibrio vulgaris (strain DP4) (Desulfovibrio vulgaris).